We begin with the raw amino-acid sequence, 331 residues long: Probable allantoicase (331 aa).

It belongs to the allantoicase family.

The catalysed reaction is allantoate + H2O = (S)-ureidoglycolate + urea. The protein operates within nitrogen metabolism; (S)-allantoin degradation; (S)-ureidoglycolate from allantoate (aminidohydrolase route): step 1/1. This Pseudomonas savastanoi pv. phaseolicola (strain 1448A / Race 6) (Pseudomonas syringae pv. phaseolicola (strain 1448A / Race 6)) protein is Probable allantoicase.